The following is a 150-amino-acid chain: Arginine repressor (150 aa).

Belongs to the ArgR family.

The protein resides in the cytoplasm. The protein operates within amino-acid biosynthesis; L-arginine biosynthesis [regulation]. In terms of biological role, regulates arginine biosynthesis genes. This Symbiobacterium thermophilum (strain DSM 24528 / JCM 14929 / IAM 14863 / T) protein is Arginine repressor.